The primary structure comprises 169 residues: Ribosomal RNA large subunit methyltransferase H (169 aa).

S-adenosyl-L-methionine contacts are provided by residues L85, G117, and L136 to W141.

It belongs to the RNA methyltransferase RlmH family. In terms of assembly, homodimer.

Its subcellular location is the cytoplasm. It catalyses the reaction pseudouridine(1915) in 23S rRNA + S-adenosyl-L-methionine = N(3)-methylpseudouridine(1915) in 23S rRNA + S-adenosyl-L-homocysteine + H(+). In terms of biological role, specifically methylates the pseudouridine at position 1915 (m3Psi1915) in 23S rRNA. This Brucella ovis (strain ATCC 25840 / 63/290 / NCTC 10512) protein is Ribosomal RNA large subunit methyltransferase H.